Consider the following 333-residue polypeptide: Delta(9)-fatty-acid desaturase fat-5 (333 aa).

Transmembrane regions (helical) follow at residues 42–62 (NVALFVALHIGALVGLYQLVF), 66–86 (WATVGWVFLLHTLGSMGVTGG), 187–207 (LPLVGIFCFALPTFIPVVLWG), and 210–230 (AFIAFYTAALFRYCFTLHATW).

Belongs to the fatty acid desaturase type 1 family. Expressed in the intestine in adult worms and in all four larval stages. Additional expression in the pharynx and tail cells after hatching and throughout the lifespan.

The protein localises to the membrane. The catalysed reaction is hexadecanoyl-CoA + 2 Fe(II)-[cytochrome b5] + O2 + 2 H(+) = (9Z)-hexadecenoyl-CoA + 2 Fe(III)-[cytochrome b5] + 2 H2O. The enzyme catalyses tetradecanoyl-CoA + 2 Fe(II)-[cytochrome b5] + O2 + 2 H(+) = (9Z)-tetradecenoyl-CoA + 2 Fe(III)-[cytochrome b5] + 2 H2O. It catalyses the reaction heptadecanoyl-CoA + 2 Fe(II)-[cytochrome b5] + O2 + 2 H(+) = (9Z)-heptadecenoyl-CoA + 2 Fe(III)-[cytochrome b5] + 2 H2O. It carries out the reaction pentadecanoyl-CoA + 2 Fe(II)-[cytochrome b5] + O2 + 2 H(+) = (9Z)-pentadecenoyl-CoA + 2 Fe(III)-[cytochrome b5] + 2 H2O. It participates in lipid metabolism; monounsaturated fatty acid biosynthesis. Its function is as follows. Delta(9)-fatty acid desaturase that acts preferentially on palmitoyl-CoA (hexadecanoyl-CoA) producing the monounsaturated palmitoleoyl-CoA ((9Z)-hexadecenoyl-CoA), which can be elongated to (11Z)-octadecenoyl-CoA (the most abundant monounsaturated fatty acid in Caenorhabditis elegans phospholipids and triacylglycerols). Also acts on pentadecanoyl-CoA, heptadecanoyl-CoA and myristoyl-CoA (tetradecanoyl-CoA), the monounsaturated fatty acids (MUFAs) produced are further used as substrates to synthesize polyunsaturated fatty acids (PUFAs) by several other desaturases and elongases. Unlike plants, Caenorhabditis elegans desaturases seem to use fatty acyl-CoAs as substrates. The polypeptide is Delta(9)-fatty-acid desaturase fat-5 (fat-5) (Caenorhabditis elegans).